The chain runs to 392 residues: MNIHEYQGKDILKKFGVSVPRGIVAFSPDEAKQAAQQLFEEQGSPVVVVKAQIHAGGRGKAGGVKLAKSPDEAMEIARQMLGATLVTHQTGPEGKQVSRLLVEEGMNIDREFYVGITLDRSTSRNVLMVSTEGGMEIEKVAEETPDKLLKIQVDPLYGLQGFQAREAAFFLGLEGEQFRNAVTFIIALYNAYMTIDASLAEINPLVVTKEGRVLALDAKINFDGNALFRHKNFLELRDTNEEDPFEVEASKSNLNYVRLDGNVGCMVNGAGLAMATMDMIQLAGGRPANFLDVGGGASPETVEEGFKIILSDKNVRAILVNIFGGIVRCDRVAGGIIQAARKIGLNLPVIVRLEGTNAEIAQKMLDESGLNLIAANGLHDAAAKVNQALAAG.

An ATP-grasp domain is found at 9-248 (KDILKKFGVS…TNEEDPFEVE (240 aa)). Residues Lys50, 57 to 59 (GRG), Glu103, Met106, and Glu111 contribute to the ATP site. Residues Asn203 and Asp217 each coordinate Mg(2+). Substrate-binding positions include Asn268 and 325–327 (GIV).

Belongs to the succinate/malate CoA ligase beta subunit family. Heterotetramer of two alpha and two beta subunits. The cofactor is Mg(2+).

It catalyses the reaction succinate + ATP + CoA = succinyl-CoA + ADP + phosphate. It carries out the reaction GTP + succinate + CoA = succinyl-CoA + GDP + phosphate. It functions in the pathway carbohydrate metabolism; tricarboxylic acid cycle; succinate from succinyl-CoA (ligase route): step 1/1. In terms of biological role, succinyl-CoA synthetase functions in the citric acid cycle (TCA), coupling the hydrolysis of succinyl-CoA to the synthesis of either ATP or GTP and thus represents the only step of substrate-level phosphorylation in the TCA. The beta subunit provides nucleotide specificity of the enzyme and binds the substrate succinate, while the binding sites for coenzyme A and phosphate are found in the alpha subunit. The polypeptide is Succinate--CoA ligase [ADP-forming] subunit beta (Chlorobium limicola (strain DSM 245 / NBRC 103803 / 6330)).